The sequence spans 356 residues: Magnesium-protoporphyrin IX monomethyl ester [oxidative] cyclase (356 aa).

It belongs to the AcsF family. Fe cation serves as cofactor.

It carries out the reaction Mg-protoporphyrin IX 13-monomethyl ester + 3 NADPH + 3 O2 + 2 H(+) = 3,8-divinyl protochlorophyllide a + 3 NADP(+) + 5 H2O. It participates in porphyrin-containing compound metabolism; chlorophyll biosynthesis (light-independent). Functionally, catalyzes the formation of the isocyclic ring in chlorophyll biosynthesis. Mediates the cyclase reaction, which results in the formation of divinylprotochlorophyllide (Pchlide) characteristic of all chlorophylls from magnesium-protoporphyrin IX 13-monomethyl ester (MgPMME). This is Magnesium-protoporphyrin IX monomethyl ester [oxidative] cyclase from Synechococcus sp. (strain CC9605).